The following is a 408-amino-acid chain: Argininosuccinate synthase (408 aa).

14-22 (AYSGGLDTS) is an ATP binding site. Positions 92 and 97 each coordinate L-citrulline. Gly122 provides a ligand contact to ATP. L-aspartate contacts are provided by Thr124, Asn128, and Asp129. Asn128 provides a ligand contact to L-citrulline. The L-citrulline site is built by Arg132, Ser181, Ser190, Glu266, and Tyr278.

This sequence belongs to the argininosuccinate synthase family. Type 1 subfamily. As to quaternary structure, homotetramer.

It is found in the cytoplasm. The enzyme catalyses L-citrulline + L-aspartate + ATP = 2-(N(omega)-L-arginino)succinate + AMP + diphosphate + H(+). It functions in the pathway amino-acid biosynthesis; L-arginine biosynthesis; L-arginine from L-ornithine and carbamoyl phosphate: step 2/3. The sequence is that of Argininosuccinate synthase from Moorella thermoacetica (strain ATCC 39073 / JCM 9320).